A 366-amino-acid chain; its full sequence is Alcohol dehydrogenase (366 aa).

Residues Cys-41, His-62, Glu-63, and Asp-167 each contribute to the Zn(2+) site.

The protein belongs to the zinc-containing alcohol dehydrogenase family. Homotetramer. Zn(2+) is required as a cofactor.

It carries out the reaction a primary alcohol + NAD(+) = an aldehyde + NADH + H(+). The enzyme catalyses a secondary alcohol + NAD(+) = a ketone + NADH + H(+). It catalyses the reaction (R,R)-butane-2,3-diol + NAD(+) = (R)-acetoin + NADH + H(+). The catalysed reaction is an aldehyde + NAD(+) + H2O = a carboxylate + NADH + 2 H(+). Its function is as follows. Multifunctional alcohol dehydrogenase exhibiting NAD(+)-dependent dehydrogenase activities for 2,3-butanediol, ethanol and acetaldehyde, and reductase activities for acetoin (NADH-dependent), and diacetyl and acetaldehyde (independently of whether NADH or NADPH is the reductant). The rate of oxidation of 2,3-butanediol is much higher than for the oxidation of ethanol. Has acetaldehyde dehydrogenase activity leading to acetate formation. May function in the release of excess reducing power in the absence of exogenous hydrogen acceptors such as oxygen. This chain is Alcohol dehydrogenase (adh), found in Cupriavidus necator (Alcaligenes eutrophus).